The primary structure comprises 102 residues: Small ribosomal subunit protein uS10 (102 aa).

Belongs to the universal ribosomal protein uS10 family. Part of the 30S ribosomal subunit.

Involved in the binding of tRNA to the ribosomes. This chain is Small ribosomal subunit protein uS10, found in Carboxydothermus hydrogenoformans (strain ATCC BAA-161 / DSM 6008 / Z-2901).